Reading from the N-terminus, the 485-residue chain is Silicon efflux transporter LSI3 (485 aa).

5 consecutive transmembrane segments (helical) span residues 14-34 (VAFG…LPIG), 37-57 (AGAL…ADDA), 59-79 (ASID…GGYL), 106-126 (VCVV…CVVL), and 180-200 (FLLG…LMLL). Basic and acidic residues predominate over residues 233-242 (ALNNNKKDDG). A disordered region spans residues 233 to 261 (ALNNNKKDDGDAATPASPEDDDGGDAESM). The next 5 helical transmembrane spans lie at 283 to 303 (LFLK…YMLG), 336 to 356 (LLVF…TGLP), 377 to 397 (VLSV…TVLL), 418 to 438 (WLLL…GSAA), and 461 to 481 (HVIF…PLIG).

It belongs to the arsenite-antimonite (ArsB) efflux (TC 2.A.45) family.

Its subcellular location is the cell membrane. Functionally, silicon efflux transporter involved in silicon transport in shoots. In the nodes, involved with LSI2 and NIP2-2/LSI6 in silicon intervascular transfer, which is required for the preferential distribution of silicon, such as hyperaccumulation of silicon in the husk. Silicon is beneficial to plant growth and helps plants to overcome abiotic and biotic stresses by preventing lodging (falling over) and increasing resistance to pests and diseases, as well as other stresses. The chain is Silicon efflux transporter LSI3 from Oryza sativa subsp. japonica (Rice).